Reading from the N-terminus, the 223-residue chain is Putative 3-methyladenine DNA glycosylase (223 aa).

This sequence belongs to the DNA glycosylase MPG family.

The chain is Putative 3-methyladenine DNA glycosylase from Rhodococcus jostii (strain RHA1).